A 613-amino-acid polypeptide reads, in one-letter code: Immunoglobulin superfamily member 8 (613 aa).

The first 27 residues, methionine 1–alanine 27, serve as a signal peptide directing secretion. Ig-like C2-type domains follow at residues arginine 28–leucine 149, proline 162–isoleucine 286, serine 303–serine 424, and proline 431–alanine 560. Over arginine 28–threonine 579 the chain is Extracellular. A disulfide bridge connects residues cysteine 49 and cysteine 127. Residue asparagine 50 is glycosylated (N-linked (GlcNAc...) asparagine). A disordered region spans residues valine 155–methionine 174. Cysteine 186 and cysteine 270 are joined by a disulfide. Residues glutamate 274–isoleucine 276 carry the EWI motif motif. Cystine bridges form between cysteine 326–cysteine 406 and cysteine 462–cysteine 544. Asparagine 327 and asparagine 463 each carry an N-linked (GlcNAc...) asparagine glycan. Serine 518 is modified (phosphoserine). The helical transmembrane segment at leucine 580–glycine 600 threads the bilayer. The Cytoplasmic portion of the chain corresponds to threonine 601–arginine 613. 2 S-palmitoyl cysteine lipidation sites follow: cysteine 604 and cysteine 605.

As to quaternary structure, interacts directly with CD82, CD81/tetraspanin-28 and CD9/tetraspanin-29. Also interacts with integrin alpha-3/beta-1 and integrin alpha-4/beta-1. Interacts with HSPA8; this interaction modulates migratory and antigen-presenting capacities of dendritic cells. As to expression, expressed in brain, kidney, testis, liver and placenta with moderate expression in all other tissues. Detected on a majority of B-cells, T-cells, and natural killer cells. Expressed on dendritic cells.

Its subcellular location is the cell membrane. Member of the immunoglobulin superfamily (IgSF) that links tetraspanin-enriched microdomains to the actin cytoskeleton and plays several important roles in innate and adaptive immunity. Acts as an inducible receptor of HSPA8 on dendritic cells to enhance the CCL21/SLC-dependent migration of activated mature dendritic cells while attenuating their antigen-specific stimulatory capacities. In complex with alpha-actinins ACTN1 and ACTN4, regulates actin dynamics in the immune synapse and subsequent T-cell activation. Inhibits the entry of several viruses such as hepatitis C Virus (HCV) or HIV-1. Mechanistically, promotes a change in CD81 organization at the plasma membrane by significantly restricting its diffusion which in turn influences CD81 interaction with Claudin-1/CLDN1, preventing CLDN1 from acting as a co-receptor required for HCV entry. Accumulates at the presynaptic terminal, the producer cell side of the virological synapse, to prevent HIV-1 Env-mediated cell-cell fusion. Highly expressed on malignant cells with antigen presentation defects, interacts with NK receptor KIR3DL2 to suppress NK-cell cytotoxicity. May participate in the regulation of neurite outgrowth and maintenance of the neural network in the adult brain. The sequence is that of Immunoglobulin superfamily member 8 (IGSF8) from Homo sapiens (Human).